We begin with the raw amino-acid sequence, 529 residues long: Inosine-5'-monophosphate dehydrogenase (529 aa).

2 CBS domains span residues 129–185 and 189–246; these read MVTD…SKQV and MTKA…PLAT. Residues Asp-283 and 334–336 each bind NAD(+); that span reads GVG. Residues Gly-336 and Gly-338 each contribute to the K(+) site. Residue Ser-339 coordinates IMP. Cys-341 serves as a coordination point for K(+). The active-site Thioimidate intermediate is the Cys-341. Residues 374 to 376, 397 to 398, and 421 to 425 contribute to the IMP site; these read DGG, GS, and YRGMG. Arg-443 functions as the Proton acceptor in the catalytic mechanism. Position 458 (Glu-458) interacts with IMP. K(+) is bound by residues Glu-511, Ser-512, and His-513.

This sequence belongs to the IMPDH/GMPR family. In terms of assembly, homotetramer. K(+) serves as cofactor.

It carries out the reaction IMP + NAD(+) + H2O = XMP + NADH + H(+). Its pathway is purine metabolism; XMP biosynthesis via de novo pathway; XMP from IMP: step 1/1. With respect to regulation, mycophenolic acid (MPA) is a non-competitive inhibitor that prevents formation of the closed enzyme conformation by binding to the same site as the amobile flap. In contrast, mizoribine monophosphate (MZP) is a competitive inhibitor that induces the closed conformation. MPA is a potent inhibitor of mammalian IMPDHs but a poor inhibitor of the bacterial enzymes. MZP is a more potent inhibitor of bacterial IMPDH. Functionally, catalyzes the conversion of inosine 5'-phosphate (IMP) to xanthosine 5'-phosphate (XMP), the first committed and rate-limiting step in the de novo synthesis of guanine nucleotides, and therefore plays an important role in the regulation of cell growth. The protein is Inosine-5'-monophosphate dehydrogenase of Mycobacterium bovis (strain ATCC BAA-935 / AF2122/97).